Here is a 153-residue protein sequence, read N- to C-terminus: Acetylacetone-cleaving enzyme (153 aa).

As to quaternary structure, homotetramer. Requires Fe cation as cofactor.

The catalysed reaction is acetylacetone + O2 = methylglyoxal + acetate + H(+). The protein operates within xenobiotic degradation; acetylacetone degradation. Its function is as follows. Cleaves acetylacetone to equimolar amounts of methylglyoxal and acetate, consuming one equivalent of molecular oxygen. The polypeptide is Acetylacetone-cleaving enzyme (dke1) (Acinetobacter johnsonii).